The chain runs to 428 residues: Dihydroorotase (428 aa).

Zn(2+) contacts are provided by His-56 and His-58. Substrate is bound by residues 58–60 and Asn-90; that span reads HLR. Residues Asp-150, His-177, and His-230 each coordinate Zn(2+). Residue Asn-276 participates in substrate binding. Asp-303 is a Zn(2+) binding site. Asp-303 is an active-site residue. His-307 contacts substrate.

This sequence belongs to the metallo-dependent hydrolases superfamily. DHOase family. Class I DHOase subfamily. Requires Zn(2+) as cofactor.

It catalyses the reaction (S)-dihydroorotate + H2O = N-carbamoyl-L-aspartate + H(+). It participates in pyrimidine metabolism; UMP biosynthesis via de novo pathway; (S)-dihydroorotate from bicarbonate: step 3/3. Functionally, catalyzes the reversible cyclization of carbamoyl aspartate to dihydroorotate. The sequence is that of Dihydroorotase from Streptomyces coelicolor (strain ATCC BAA-471 / A3(2) / M145).